Reading from the N-terminus, the 254-residue chain is Bidirectional sugar transporter SWEET6b (254 aa).

The Extracellular portion of the chain corresponds to 1-9 (MISPDAARN). The chain crosses the membrane as a helical span at residues 10–30 (VVGIIGNVISFGLFLAPVPTF). The MtN3/slv 1 domain maps to 10-98 (VVGIIGNVIS…IFFLYSPNKK (89 aa)). Residues 31–45 (WRICKRKDVEEFKAD) are Cytoplasmic-facing. Residues 46 to 66 (PYLATLLNCMLWVFYGIPIVH) traverse the membrane as a helical segment. The Extracellular portion of the chain corresponds to 67 to 69 (PNS). A helical transmembrane segment spans residues 70-90 (ILVVTINGIGLVVEGTYLFIF). Over 91–101 (FLYSPNKKRLR) the chain is Cytoplasmic. Residues 102–122 (MLAVLGVELVFMLAVILGVLL) form a helical membrane-spanning segment. Residues 123 to 131 (GAHTHKKRS) are Extracellular-facing. The helical transmembrane segment at 132 to 152 (MIVGILCVFFGSIMYFSPLTI) threads the bilayer. One can recognise a MtN3/slv 2 domain in the interval 133–216 (IVGILCVFFG…LILYACYYRT (84 aa)). The Cytoplasmic segment spans residues 153-165 (MGKVIKTKSVEYM). A helical membrane pass occupies residues 166 to 186 (PFFLSLVCFLNGVCWTAYALI). At 187 to 189 (RFD) the chain is on the extracellular side. Residues 190–210 (IYVTIPNSLGAIFGAIQLILY) form a helical membrane-spanning segment. Over 211–254 (ACYYRTTPKKTKAAKDVEMPSVISGPGAAATASGGSVVSVTVER) the chain is Cytoplasmic.

Belongs to the SWEET sugar transporter family. Forms homooligomers and/or heterooligomers.

The protein resides in the cell membrane. In terms of biological role, mediates both low-affinity uptake and efflux of sugar across the plasma membrane. This chain is Bidirectional sugar transporter SWEET6b (SWEET6B), found in Oryza sativa subsp. indica (Rice).